The primary structure comprises 90 residues: Progonadoliberin-3 (90 aa).

The N-terminal stretch at 1-23 (MEAGSRVIMQVLLLALVVQVTLS) is a signal peptide. Gln24 carries the pyrrolidone carboxylic acid modification. Glycine amide is present on Gly33.

Belongs to the GnRH family. In terms of tissue distribution, expressed only in the terminal nerve nucleus of the telencephalon.

The protein localises to the secreted. Functionally, stimulates the secretion of gonadotropins. This Haplochromis burtoni (Burton's mouthbrooder) protein is Progonadoliberin-3 (gnrh3).